A 551-amino-acid chain; its full sequence is Chloride channel CLIC-like protein 1 (551 aa).

An N-terminal signal peptide occupies residues 1–18 (MLCSLLLCECLLLVAGYA). Residues 19-184 (HDDDWIDPTD…EDSFGVDPYN (166 aa)) lie on the Lumenal side of the membrane. The chain crosses the membrane as a helical span at residues 185–205 (VLMVLLCLLCIVVLVATELWT). Over 206–216 (YVRWYTQLRRV) the chain is Cytoplasmic. The chain crosses the membrane as a helical span at residues 217–237 (LIISFLFSLGWNWMYLYKLAF). The Lumenal portion of the chain corresponds to 238–329 (AQHQAEVAKM…GEFIKALMKE (92 aa)). A helical membrane pass occupies residues 330 to 350 (IPALLHLPVLIIMALAILSFC). Residues 351–551 (YGAGKSVHVL…GQDPVSSPCG (201 aa)) lie on the Cytoplasmic side of the membrane. The interval 363-415 (IGGPESEPPQALRPRDRRRQEEIDYRPDGGAGDADFHYRGQMGPTEQGPYAKT) is disordered. Over residues 380 to 389 (RRQEEIDYRP) the composition is skewed to basic and acidic residues. Phosphoserine occurs at positions 438 and 464. Positions 447 to 551 (VPDAEAREHP…GQDPVSSPCG (105 aa)) are disordered. Threonine 482 bears the Phosphothreonine mark. The segment covering 488–508 (TESSQSAKPVSGQDTSGNTEG) has biased composition (polar residues). 3 positions are modified to phosphoserine: serine 509, serine 524, and serine 532.

It belongs to the chloride channel MCLC family. As to quaternary structure, homomultimers. Interacts with mitochondrial protein PIGBOS1 (via C-terminus); the interaction occurs at the mitochondria-associated endoplasmic reticulum (ER) membrane, a zone of contact between the ER and mitochondrial membranes, but does not appear to play a role in ER-mitochondria tethering and is not affected by ER stress. Interacts with CALR. In terms of tissue distribution, expressed in the retina of the eye, with extensive expression in the lamina cribrosa, optic nerve, ganglion cell layer, inner nuclear layer, outer nuclear layer and retinal pigment epithelium.

The protein resides in the endoplasmic reticulum membrane. It catalyses the reaction chloride(in) = chloride(out). The enzyme catalyses bromide(in) = bromide(out). The catalysed reaction is nitrate(in) = nitrate(out). It carries out the reaction fluoride(in) = fluoride(out). With respect to regulation, inhibited by ER lumenal Ca(2+). Its function is as follows. Anion-selective channel with Ca(2+)-dependent and voltage-independent gating. Permeable to small monovalent anions with selectivity for bromide &gt; chloride &gt; nitrate &gt; fluoride. Operates in the endoplasmic reticulum (ER) membrane where it mediates chloride efflux to compensate for the loss of positive charges from the ER lumen upon Ca(2+) release. Contributes to the maintenance of ER Ca(2+) pools and activation of unfolded protein response to prevent accumulation of misfolded proteins in the ER lumen. Particularly involved in ER homeostasis mechanisms underlying motor neurons and retinal photoreceptors survival. The polypeptide is Chloride channel CLIC-like protein 1 (Homo sapiens (Human)).